Consider the following 332-residue polypeptide: Glycine betaine-binding periplasmic protein OusX (332 aa).

The signal sequence occupies residues 1–21 (MRNISMATLALTTVLSTGLFA).

As to quaternary structure, the complex is composed of two ATP-binding proteins (OusV), two transmembrane proteins (OusW) and a solute-binding protein (OusX).

Its subcellular location is the periplasm. Its function is as follows. Part of the OusB ABC transporter complex involved in glycine betaine and choline uptake. Binds glycine betaine. The protein is Glycine betaine-binding periplasmic protein OusX of Dickeya dadantii (strain 3937) (Erwinia chrysanthemi (strain 3937)).